Reading from the N-terminus, the 337-residue chain is Probable dihydroorotase (337 aa).

6 residues coordinate Zn(2+): H12, H14, K95, H132, H170, and D240. At K95 the chain carries N6-carboxylysine.

This sequence belongs to the metallo-dependent hydrolases superfamily. DHOase family. Class II DHOase subfamily. It depends on Zn(2+) as a cofactor.

It carries out the reaction (S)-dihydroorotate + H2O = N-carbamoyl-L-aspartate + H(+). It functions in the pathway pyrimidine metabolism; UMP biosynthesis via de novo pathway; (S)-dihydroorotate from bicarbonate: step 3/3. The polypeptide is Probable dihydroorotase (ura2) (Schizosaccharomyces pombe (strain 972 / ATCC 24843) (Fission yeast)).